The following is a 154-amino-acid chain: Probable deoxyuridine 5'-triphosphate nucleotidohydrolase (154 aa).

It belongs to the dCTP deaminase family. Archaeal dUTPase subfamily.

It catalyses the reaction dUTP + H2O = dUMP + diphosphate + H(+). It participates in pyrimidine metabolism; dUMP biosynthesis; dUMP from dCTP (dUTP route): step 2/2. Functionally, this enzyme is involved in nucleotide metabolism: it produces dUMP, the immediate precursor of thymidine nucleotides and it decreases the intracellular concentration of dUTP so that uracil cannot be incorporated into DNA. The protein is Probable deoxyuridine 5'-triphosphate nucleotidohydrolase of Methanopyrus kandleri (strain AV19 / DSM 6324 / JCM 9639 / NBRC 100938).